Consider the following 370-residue polypeptide: Arginine kinase (370 aa).

One can recognise a Phosphagen kinase N-terminal domain in the interval 6–89 (QKKYPAKDDF…FDPVIEEYHN (84 aa)). Residues 115–358 (YVISSRVRTG…KVLIEMEKKL (244 aa)) enclose the Phosphagen kinase C-terminal domain. Residues 118 to 122 (SSRVR) and His181 contribute to the ATP site. Glu222 is a substrate binding site. Arg226 contacts ATP. Cys274 provides a ligand contact to substrate. Residues 283-287 (RCSVH) and 311-316 (RGTSGE) each bind ATP. Glu316 serves as a coordination point for substrate.

The protein belongs to the ATP:guanido phosphotransferase family. In terms of assembly, homodimer. In terms of processing, the N-terminus is blocked.

The catalysed reaction is L-arginine + ATP = N(omega)-phospho-L-arginine + ADP + H(+). This chain is Arginine kinase (AK), found in Stichopus japonicus (Sea cucumber).